We begin with the raw amino-acid sequence, 320 residues long: 4-hydroxy-3-methylbut-2-enyl diphosphate reductase (320 aa).

C13 is a [4Fe-4S] cluster binding site. The (2E)-4-hydroxy-3-methylbut-2-enyl diphosphate site is built by H41 and H75. The dimethylallyl diphosphate site is built by H41 and H75. Isopentenyl diphosphate is bound by residues H41 and H75. C97 is a [4Fe-4S] cluster binding site. A (2E)-4-hydroxy-3-methylbut-2-enyl diphosphate-binding site is contributed by H125. H125 contacts dimethylallyl diphosphate. H125 lines the isopentenyl diphosphate pocket. The active-site Proton donor is the E127. T168 contributes to the (2E)-4-hydroxy-3-methylbut-2-enyl diphosphate binding site. C225 lines the [4Fe-4S] cluster pocket. Residues S253, S254, N255, and S302 each coordinate (2E)-4-hydroxy-3-methylbut-2-enyl diphosphate. Dimethylallyl diphosphate contacts are provided by S253, S254, N255, and S302. S253, S254, N255, and S302 together coordinate isopentenyl diphosphate.

This sequence belongs to the IspH family. It depends on [4Fe-4S] cluster as a cofactor.

It catalyses the reaction isopentenyl diphosphate + 2 oxidized [2Fe-2S]-[ferredoxin] + H2O = (2E)-4-hydroxy-3-methylbut-2-enyl diphosphate + 2 reduced [2Fe-2S]-[ferredoxin] + 2 H(+). The catalysed reaction is dimethylallyl diphosphate + 2 oxidized [2Fe-2S]-[ferredoxin] + H2O = (2E)-4-hydroxy-3-methylbut-2-enyl diphosphate + 2 reduced [2Fe-2S]-[ferredoxin] + 2 H(+). Its pathway is isoprenoid biosynthesis; dimethylallyl diphosphate biosynthesis; dimethylallyl diphosphate from (2E)-4-hydroxy-3-methylbutenyl diphosphate: step 1/1. The protein operates within isoprenoid biosynthesis; isopentenyl diphosphate biosynthesis via DXP pathway; isopentenyl diphosphate from 1-deoxy-D-xylulose 5-phosphate: step 6/6. In terms of biological role, catalyzes the conversion of 1-hydroxy-2-methyl-2-(E)-butenyl 4-diphosphate (HMBPP) into a mixture of isopentenyl diphosphate (IPP) and dimethylallyl diphosphate (DMAPP). Acts in the terminal step of the DOXP/MEP pathway for isoprenoid precursor biosynthesis. This is 4-hydroxy-3-methylbut-2-enyl diphosphate reductase from Chlorobium luteolum (strain DSM 273 / BCRC 81028 / 2530) (Pelodictyon luteolum).